The primary structure comprises 195 residues: HTH-type transcriptional regulator BetI (195 aa).

The region spanning 8 to 68 (SIRRRQLIDA…ATMRDITSQL (61 aa)) is the HTH tetR-type domain. The H-T-H motif DNA-binding region spans 31–50 (TIAQIARRAGVSTGIISHYF).

The protein operates within amine and polyamine biosynthesis; betaine biosynthesis via choline pathway [regulation]. Functionally, repressor involved in the biosynthesis of the osmoprotectant glycine betaine. It represses transcription of the choline transporter BetT and the genes of BetAB involved in the synthesis of glycine betaine. The polypeptide is HTH-type transcriptional regulator BetI (Escherichia coli O157:H7).